We begin with the raw amino-acid sequence, 439 residues long: Transcription factor pydF (439 aa).

A compositionally biased stretch (basic and acidic residues) spans 1 to 18 (MGRPQRADKQRRETDGPQ). Disordered regions lie at residues 1–53 (MGRP…GYAR), 143–177 (HVEK…QAVE), and 239–262 (AFRD…MQQH). Polar residues predominate over residues 20-35 (SRPSLTQAQKNSTTIR). Residues 143–153 (HVEKATAERPG) are compositionally biased toward basic and acidic residues. Residues 157–172 (SSSPSSSLLRTSSSPS) are compositionally biased toward low complexity. A compositionally biased stretch (polar residues) spans 243 to 260 (GQNNGTSRPNTAASQNMQ).

The protein resides in the nucleus. Functionally, transcription factor; part of the gene cluster that mediates the biosynthesis of pyrrocidines, fungal natural products containing a macrocyclic para-cyclophane connected to a decahydrofluorene ring system that show potent antibiotic activities toward Gram-negative bacteria. This Acremonium sp protein is Transcription factor pydF.